The sequence spans 162 residues: Protein lon-8 (162 aa).

An N-terminal signal peptide occupies residues methionine 1–alanine 23.

It localises to the secreted. Secreted protein that is involved in larval elongation, early adult growth and male tail development. The chain is Protein lon-8 from Caenorhabditis elegans.